A 464-amino-acid polypeptide reads, in one-letter code: MAPISKVFDYLVIGGGSGGLASARRAAKHGAKVALIEASGRLGGTCVNYGCVPKKIMWNIADLVAKMKTAKQNGFPNSQLGSFDWGMIKRKRDAYIGRLNGIYERNVNKDGVAYISGHASFVSPTEVAVDMNDGSGTQVFSAKYILIAVGGHPIWPSHIPGAEYGIDSDGFFELESQPKRVAIVGAGYIAVELAGVFAALGTETHMFIRQSKFLRKFDPIISDGIMDHFQHIGINVHTNSLEFKKVEKLPSGELCIHQQDGSTFNVDTLLWAIGRAPKIQGLRLEKAGVKTLPNGIIIADTYQRTNVPTVLSLGDVCGKLELTPVAIAAGRRLSDRLFGGIKDAHLDYEEVPSVVFAHPEAGTIGLTEQEAIDKYGESQIKVYNTKFNGLNYSMVEQEDKVPTTYKLVCAGPLQKVVGLHLVGDFSAEILQGFGVAIKMGATKSDFDSCVAIHPTSAEELVTLV.

Residues S17 and G18 each coordinate FAD. S17 lines the glutathione pocket. A glutathione-binding site is contributed by R24. The FAD site is built by E37, T45, C46, and K54. An intrachain disulfide couples C46 to C51. Y103 is a glutathione binding site. An FAD-binding site is contributed by A119. Residues A186, I189, E192, R209, R215, and G274 each contribute to the NADP(+) site. FAD is bound at residue D315. Position 321 (E321) interacts with NADP(+). T323 is an FAD binding site. R331 is a binding site for glutathione. V354 is a binding site for NADP(+). H453 provides a ligand contact to FAD. Residue H453 is the Proton acceptor of the active site.

This sequence belongs to the class-I pyridine nucleotide-disulfide oxidoreductase family. As to quaternary structure, homodimer. It depends on FAD as a cofactor.

The protein resides in the cytoplasm. The protein localises to the mitochondrion. The catalysed reaction is 2 glutathione + NADP(+) = glutathione disulfide + NADPH + H(+). Its function is as follows. Catalyzes the reduction of glutathione disulfide (GSSG) to reduced glutathione (GSH). Constitutes the major mechanism to maintain a high GSH:GSSG ratio in the cytosol. The chain is Glutathione reductase (pgr1) from Schizosaccharomyces pombe (strain 972 / ATCC 24843) (Fission yeast).